The sequence spans 294 residues: MYNIFKGLITALITPFKNNKLDLYAFESILNQQIKHEVDAVLIAGSTGEANSLSFEEYKLLLKTSVEIVNNRMPIISGCSSNNTAYAIELAIASKKIGVDGFMASPPSYVKPTQHGIYKHFEALHEACNLPIMLYSAPTRSGVDFSDETILRLSKLPRILALKDCGVDLERPMRIRAIVKEDFNILTGNDEVVLAFHAQGVIGWISVTSNIAPKICKELLDKWYNNDIQGALEMHQKLLPLYKALFLESNPIPVKYAAHYLGLCENEIRLPLTEASDSAKKQIKKIITSLSIKI.

T47 contacts pyruvate. Y135 serves as the catalytic Proton donor/acceptor. The active-site Schiff-base intermediate with substrate is the K163. A pyruvate-binding site is contributed by I205.

This sequence belongs to the DapA family. Homotetramer; dimer of dimers.

It is found in the cytoplasm. The catalysed reaction is L-aspartate 4-semialdehyde + pyruvate = (2S,4S)-4-hydroxy-2,3,4,5-tetrahydrodipicolinate + H2O + H(+). It participates in amino-acid biosynthesis; L-lysine biosynthesis via DAP pathway; (S)-tetrahydrodipicolinate from L-aspartate: step 3/4. Its function is as follows. Catalyzes the condensation of (S)-aspartate-beta-semialdehyde [(S)-ASA] and pyruvate to 4-hydroxy-tetrahydrodipicolinate (HTPA). This is 4-hydroxy-tetrahydrodipicolinate synthase from Rickettsia typhi (strain ATCC VR-144 / Wilmington).